Here is a 361-residue protein sequence, read N- to C-terminus: Porphobilinogen deaminase (361 aa).

S2 bears the N-acetylserine mark. At S69 the chain carries Phosphoserine. K74 is subject to N6-acetyllysine. S147 carries the phosphoserine modification. An S-(dipyrrolylmethanemethyl)cysteine modification is found at C261.

Belongs to the HMBS family. In terms of assembly, monomer. Dipyrromethane is required as a cofactor.

It is found in the cytoplasm. Its subcellular location is the cytosol. The catalysed reaction is 4 porphobilinogen + H2O = hydroxymethylbilane + 4 NH4(+). The protein operates within porphyrin-containing compound metabolism; protoporphyrin-IX biosynthesis; coproporphyrinogen-III from 5-aminolevulinate: step 2/4. As part of the heme biosynthetic pathway, catalyzes the sequential polymerization of four molecules of porphobilinogen to form hydroxymethylbilane, also known as preuroporphyrinogen. Catalysis begins with the assembly of the dipyrromethane cofactor by the apoenzyme from two molecules of porphobilinogen or from preuroporphyrinogen. The covalently linked cofactor acts as a primer, around which the tetrapyrrole product is assembled. In the last step of catalysis, the product, preuroporphyrinogen, is released, leaving the cofactor bound to the holodeaminase intact. The chain is Porphobilinogen deaminase (HMBS) from Bos taurus (Bovine).